We begin with the raw amino-acid sequence, 618 residues long: Carotenoid cleavage dioxygenase 7, chloroplastic (618 aa).

Residues 1 to 31 (MSLPIPPKFLPPLKSPPIHHHQTPPPLAPPR) constitute a chloroplast transit peptide. A disordered region spans residues 11–34 (PPLKSPPIHHHQTPPPLAPPRAAI). Residues His266, His319, His398, and His612 each coordinate Fe cation.

This sequence belongs to the carotenoid oxygenase family. The cofactor is Fe(2+). In terms of tissue distribution, expressed in flowers, siliques, inflorescence stems, petiole, leaves and roots.

It localises to the plastid. The protein resides in the chloroplast. The catalysed reaction is 9-cis-beta-carotene + O2 = 9-cis-10'-apo-beta-carotenal + beta-ionone. In terms of biological role, involved in strigolactones biosynthesis by cleaving asymmetrically a variety of linear and cyclic carotenoids at the 9-10 double bond. Produces one C(13) beta-ionone and the C(27) 10'-apo-beta-carotenal. Strigolactones are hormones that inhibit tillering and shoot branching through the MAX-dependent pathway, contribute to the regulation of shoot architectural response to phosphate-limiting conditions and function as rhizosphere signal that stimulates hyphal branching of arbuscular mycorrhizal fungi and trigger seed germination of root parasitic weeds. No activity on lycopene, lutein, zeaxanthin, violaxanthin or neoxanthin. Probably not involved in abscisic acid biosynthesis. The protein is Carotenoid cleavage dioxygenase 7, chloroplastic (CCD7) of Arabidopsis thaliana (Mouse-ear cress).